Here is a 520-residue protein sequence, read N- to C-terminus: MLVRGLPLRSVLVKGCQPLLSAPREGPGHPRVPTGEGAGMSSHSPRPFKEIPSPGDNGWINLYHFWREKGPKKLHYHHFQNFQKYGPIYREKLGNVESVYIVDPEDVALLFKFEGPHPERFLIPPWTAYHQYFQKPVGVLFKSSDAWKKDRLALNPEVMALESIKNFIPLLDPVSQDFVSLLHRRMEQQGSGKFSGPIIEDLFRFAFESITNVIFGERQGMLDEIVDPEAQRFIDAVYKMFHTSVPMLSLPPDLFRLFRTKTWRDHVAAWDTVFSKAEQYTEKFYQDLKQKRHFDSYPGIFYRLLASNKLPFKDIQANVTEMLAGGVDTTSMSLQWHLYEIARNLRVQEMLREEVLAARRQAQGDTSTMVQMVPLLKASIKETLRLHPIAVTLQRYPQNDLVIRDYMIPAKTLVQVSIYTMGQDPTFFSNPRRFDPTRWLDKNKDLTHFRNLGFGWGVRQCLGRRIAELEMTLFLIHILENFRVEIQHLNDVDSTFGLILIPEKPISFTFWPITRAPPQA.

Residues 1–39 (MLVRGLPLRSVLVKGCQPLLSAPREGPGHPRVPTGEGAG) constitute a mitochondrion transit peptide. A disordered region spans residues 19 to 47 (LLSAPREGPGHPRVPTGEGAGMSSHSPRP). Cys-461 contributes to the heme binding site.

Belongs to the cytochrome P450 family. Interacts with FDX1/adrenodoxin. Heme serves as cofactor.

The protein localises to the mitochondrion inner membrane. The enzyme catalyses 6 reduced [adrenodoxin] + cholesterol + 3 O2 + 6 H(+) = 4-methylpentanal + pregnenolone + 6 oxidized [adrenodoxin] + 4 H2O. It carries out the reaction 2 reduced [adrenodoxin] + cholesterol + O2 + 2 H(+) = (22R)-hydroxycholesterol + 2 oxidized [adrenodoxin] + H2O. The catalysed reaction is (22R)-hydroxycholesterol + 2 reduced [adrenodoxin] + O2 + 2 H(+) = (20R,22R)-20,22-dihydroxycholesterol + 2 oxidized [adrenodoxin] + H2O. It catalyses the reaction (20R,22R)-20,22-dihydroxycholesterol + 2 reduced [adrenodoxin] + O2 + 2 H(+) = 4-methylpentanal + pregnenolone + 2 oxidized [adrenodoxin] + 2 H2O. It participates in lipid metabolism; C21-steroid hormone metabolism. Its pathway is steroid metabolism; cholesterol metabolism. A cytochrome P450 monooxygenase that catalyzes the side-chain hydroxylation and cleavage of cholesterol to pregnenolone, the precursor of most steroid hormones. Catalyzes three sequential oxidation reactions of cholesterol, namely the hydroxylation at C22 followed with the hydroxylation at C20 to yield 20R,22R-hydroxycholesterol that is further cleaved between C20 and C22 to yield the C21-steroid pregnenolone and 4-methylpentanal. Mechanistically, uses molecular oxygen inserting one oxygen atom into a substrate and reducing the second into a water molecule. Two electrons are provided by NADPH via a two-protein mitochondrial transfer system comprising flavoprotein FDXR (adrenodoxin/ferredoxin reductase) and nonheme iron-sulfur protein FDX1 or FDX2 (adrenodoxin/ferredoxin). The chain is Cholesterol side-chain cleavage enzyme, mitochondrial (CYP11A1) from Equus caballus (Horse).